Reading from the N-terminus, the 62-residue chain is Sperm histone (62 aa).

Residues 1–62 (MARYRRSRTR…GSRRRRRRRY (62 aa)) are disordered. A Phosphothreonine modification is found at threonine 9.

The protein belongs to the protamine P1 family. In terms of tissue distribution, testis.

The protein localises to the nucleus. Its subcellular location is the chromosome. Functionally, protamines substitute for histones in the chromatin of sperm during the haploid phase of spermatogenesis. They compact sperm DNA into a highly condensed, stable and inactive complex. This Gallus gallus (Chicken) protein is Sperm histone.